Here is a 269-residue protein sequence, read N- to C-terminus: Formamidopyrimidine-DNA glycosylase (269 aa).

P2 functions as the Schiff-base intermediate with DNA in the catalytic mechanism. E3 (proton donor) is an active-site residue. K57 functions as the Proton donor; for beta-elimination activity in the catalytic mechanism. DNA is bound by residues H90, R109, and K150. An FPG-type zinc finger spans residues Q235–K269. R259 acts as the Proton donor; for delta-elimination activity in catalysis.

Belongs to the FPG family. Monomer. It depends on Zn(2+) as a cofactor.

The catalysed reaction is Hydrolysis of DNA containing ring-opened 7-methylguanine residues, releasing 2,6-diamino-4-hydroxy-5-(N-methyl)formamidopyrimidine.. The enzyme catalyses 2'-deoxyribonucleotide-(2'-deoxyribose 5'-phosphate)-2'-deoxyribonucleotide-DNA = a 3'-end 2'-deoxyribonucleotide-(2,3-dehydro-2,3-deoxyribose 5'-phosphate)-DNA + a 5'-end 5'-phospho-2'-deoxyribonucleoside-DNA + H(+). Functionally, involved in base excision repair of DNA damaged by oxidation or by mutagenic agents. Acts as a DNA glycosylase that recognizes and removes damaged bases. Has a preference for oxidized purines, such as 7,8-dihydro-8-oxoguanine (8-oxoG). Has AP (apurinic/apyrimidinic) lyase activity and introduces nicks in the DNA strand. Cleaves the DNA backbone by beta-delta elimination to generate a single-strand break at the site of the removed base with both 3'- and 5'-phosphates. The protein is Formamidopyrimidine-DNA glycosylase of Escherichia coli O157:H7.